Reading from the N-terminus, the 207-residue chain is MRLFVGLGNPGTKYQDNRHNIGFMVIDEIARRHGFSPWRRRFQGETSDGALDGERITLLKPLTYMNESGRAVQEAASFYKIGQGEVAVFHDEIELPPAKVRVKVGGGIAGHNGLRSISAHIGNDYLRVRLGVGHPGVKEMVHGHVLGDFAKSERPWVAALCEIAADNAGLIAKGKDASFANKVHLAMQAKGFLDEDKKKSGDNKVAK.

A tRNA-binding site is contributed by Tyr-14. The Proton acceptor role is filled by His-19. TRNA is bound by residues Tyr-64, Asn-66, and Asn-112.

The protein belongs to the PTH family. As to quaternary structure, monomer.

Its subcellular location is the cytoplasm. It catalyses the reaction an N-acyl-L-alpha-aminoacyl-tRNA + H2O = an N-acyl-L-amino acid + a tRNA + H(+). Functionally, hydrolyzes ribosome-free peptidyl-tRNAs (with 1 or more amino acids incorporated), which drop off the ribosome during protein synthesis, or as a result of ribosome stalling. In terms of biological role, catalyzes the release of premature peptidyl moieties from peptidyl-tRNA molecules trapped in stalled 50S ribosomal subunits, and thus maintains levels of free tRNAs and 50S ribosomes. The sequence is that of Peptidyl-tRNA hydrolase from Rhodopseudomonas palustris (strain HaA2).